Here is a 198-residue protein sequence, read N- to C-terminus: Recombination protein RecR (198 aa).

Residues 57 to 72 form a C4-type zinc finger; that stretch reads CSVCGHITENDPCYIC. In terms of domain architecture, Toprim spans 80-175; sequence SVICVVEDDK…KVTRLAQGLS (96 aa).

Belongs to the RecR family.

Functionally, may play a role in DNA repair. It seems to be involved in an RecBC-independent recombinational process of DNA repair. It may act with RecF and RecO. The protein is Recombination protein RecR of Staphylococcus aureus (strain MSSA476).